The following is a 1039-amino-acid chain: Isoleucine--tRNA ligase (1039 aa).

Positions 46–56 match the 'HIGH' region motif; that stretch reads PYCSGAIHLGT. The short motif at 600–604 is the 'KMSKS' region element; that stretch reads KMSKS. Lys603 is a binding site for ATP.

The protein belongs to the class-I aminoacyl-tRNA synthetase family. IleS type 2 subfamily. As to quaternary structure, monomer. The cofactor is Zn(2+).

The protein resides in the cytoplasm. The catalysed reaction is tRNA(Ile) + L-isoleucine + ATP = L-isoleucyl-tRNA(Ile) + AMP + diphosphate. Catalyzes the attachment of isoleucine to tRNA(Ile). As IleRS can inadvertently accommodate and process structurally similar amino acids such as valine, to avoid such errors it has two additional distinct tRNA(Ile)-dependent editing activities. One activity is designated as 'pretransfer' editing and involves the hydrolysis of activated Val-AMP. The other activity is designated 'posttransfer' editing and involves deacylation of mischarged Val-tRNA(Ile). This chain is Isoleucine--tRNA ligase, found in Methanocaldococcus jannaschii (strain ATCC 43067 / DSM 2661 / JAL-1 / JCM 10045 / NBRC 100440) (Methanococcus jannaschii).